Reading from the N-terminus, the 103-residue chain is Small ribosomal subunit protein uS10 (103 aa).

The protein belongs to the universal ribosomal protein uS10 family. Part of the 30S ribosomal subunit.

Involved in the binding of tRNA to the ribosomes. The chain is Small ribosomal subunit protein uS10 from Chromohalobacter salexigens (strain ATCC BAA-138 / DSM 3043 / CIP 106854 / NCIMB 13768 / 1H11).